The chain runs to 159 residues: Disulfide bond formation protein B (159 aa).

Topologically, residues 1-8 (MQANSRAF) are cytoplasmic. A helical transmembrane segment spans residues 9–25 (FLLIAVIAFGLVGYALY). At 26–43 (LQHVEGLQPCPLCVLQRF) the chain is on the periplasmic side. The cysteines at positions 35 and 38 are disulfide-linked. A helical transmembrane segment spans residues 44-57 (AFVGIGVFSLLAAL). At 58 to 63 (SSATRL) the chain is on the cytoplasmic side. Residues 64–81 (LWHGLGMLSGLGGIFVAG) traverse the membrane as a helical segment. The Periplasmic segment spans residues 82 to 136 (YHVSLLLNPKASCGIDPIENWVNALPTAKWLPQVFESDGLCTAPLPPVLGVSIPL). Cysteines 94 and 122 form a disulfide. A helical transmembrane segment spans residues 137 to 155 (WSLIWMVILALTLVVAMIR). The Cytoplasmic portion of the chain corresponds to 156–159 (RERR).

This sequence belongs to the DsbB family.

It localises to the cell inner membrane. Required for disulfide bond formation in some periplasmic proteins. Acts by oxidizing the DsbA protein. The sequence is that of Disulfide bond formation protein B from Ralstonia nicotianae (strain ATCC BAA-1114 / GMI1000) (Ralstonia solanacearum).